We begin with the raw amino-acid sequence, 1054 residues long: DIS3-like exonuclease 1 (1054 aa).

A CSD1 domain is found at 236–309 (AGIKSGRYIQ…PKNEWKGRTV (74 aa)). In terms of domain architecture, CSD2 spans 365–431 (ILVTPWDYRI…GEIATILVEN (67 aa)). The RNB domain occupies 465–816 (RKDLRKSHLV…VHRLLMAAIS (352 aa)). Residue Ser989 is modified to Phosphoserine.

This sequence belongs to the RNR ribonuclease family. In terms of assembly, component of the RNA exosome complex. The catalytically inactive RNA exosome core (Exo-9) complex is believed to associate with catalytic subunits EXOSC10, and DIS3 or DIS3L in cytoplasmic- and nuclear-specific RNA exosome complex forms. It depends on Mg(2+) as a cofactor.

It is found in the cytoplasm. The catalysed reaction is Exonucleolytic cleavage in the 3'- to 5'-direction to yield nucleoside 5'-phosphates.. Its function is as follows. Catalytic component of the RNA exosome complex which has 3'-&gt;5' exoribonuclease activity and participates in a multitude of cellular RNA processing and degradation events. In the cytoplasm, the RNA exosome complex is involved in general mRNA turnover and specifically degrades inherently unstable mRNAs containing AU-rich elements (AREs) within their 3' untranslated regions, and in RNA surveillance pathways, preventing translation of aberrant mRNAs. It seems to be involved in degradation of histone mRNA. The protein is DIS3-like exonuclease 1 (DIS3L) of Homo sapiens (Human).